The sequence spans 332 residues: NADH-quinone oxidoreductase subunit H (332 aa).

9 helical membrane-spanning segments follow: residues 4–24 (FAFF…IFAS), 44–64 (IGPD…MIKL), 78–98 (FIFA…LAAI), 120–140 (VALL…FLGG), 165–185 (VGAL…LVDI), 194–214 (FSWL…ALFI), 255–275 (IAGA…FWII), 279–299 (IMMI…RAAF), and 312–332 (YLIL…AVLL).

It belongs to the complex I subunit 1 family. As to quaternary structure, NDH-1 is composed of 14 different subunits. Subunits NuoA, H, J, K, L, M, N constitute the membrane sector of the complex.

Its subcellular location is the cell inner membrane. It catalyses the reaction a quinone + NADH + 5 H(+)(in) = a quinol + NAD(+) + 4 H(+)(out). In terms of biological role, NDH-1 shuttles electrons from NADH, via FMN and iron-sulfur (Fe-S) centers, to quinones in the respiratory chain. The immediate electron acceptor for the enzyme in this species is believed to be ubiquinone. Couples the redox reaction to proton translocation (for every two electrons transferred, four hydrogen ions are translocated across the cytoplasmic membrane), and thus conserves the redox energy in a proton gradient. This subunit may bind ubiquinone. The polypeptide is NADH-quinone oxidoreductase subunit H (Campylobacter jejuni (strain RM1221)).